The primary structure comprises 922 residues: Autophagy-related protein 9B (922 aa).

Disordered stretches follow at residues 1-22 (MVRR…DLGP) and 85-144 (TPHN…MGPL). Residues 1 to 206 (MVRRTGWGGS…KIYSYHQRNG (206 aa)) lie on the Cytoplasmic side of the membrane. Positions 85-114 (TPHNVLPTPTTPSTQAHPTMIHTSASPSWG) are enriched in polar residues. Over residues 115–124 (SHSTPPLASA) the composition is skewed to low complexity. The Tyrosine-based sorting signal motif lies at 150–153 (YERL). A helical transmembrane segment spans residues 207-227 (FACILLEDVFQLGQFIFIVTF). At 228–275 (TTFLLRCVDYNVLFNNQPKNHTRRGPLHSKVTLSDAILPSAQCAEKIH) the chain is on the lumenal side. A helical transmembrane segment spans residues 276–296 (DSPLLVFLLVLAAGFWLFQLL). Topologically, residues 297-437 (RSVCNLFSYW…GVLANRWRRT (141 aa)) are cytoplasmic. Residues 438-458 (VLLLAAVNLALSPLVLAWQVL) lie within the membrane without spanning it. Over 459–523 (HAFYSHVELL…RAAEPPAPLR (65 aa)) the chain is Cytoplasmic. Residues 524–544 (ALLARQLVFFSGALFAALLVL) traverse the membrane as a helical segment. At 545–550 (TIYDED) the chain is on the lumenal side. The chain crosses the membrane as a helical span at residues 551–571 (VLAVEHVLTTMTALGVTATVA). Residues 572 to 624 (RSFIPEEQCQGRSSQLLLQAALAHMHYLPEEPGATGARASSYWQMAQLLQYRA) are Cytoplasmic-facing. Residues 625–645 (VSLLEELLSPLLTPLFLLFWF) lie within the membrane without spanning it. Topologically, residues 646-922 (RPRALEIIDF…QKEPLTGPLH (277 aa)) are cytoplasmic. The segment at 848-922 (ELWGEASASS…QKEPLTGPLH (75 aa)) is disordered. Low complexity-rich tracts occupy residues 854–870 (SASS…QPGS) and 877–889 (SWSS…ASSP). The segment covering 890–899 (RQQWGTQRAQ) has biased composition (polar residues).

This sequence belongs to the ATG9 family. As to quaternary structure, homotrimer; forms a homotrimer with a central pore that forms a path between the two membrane leaflets. Expressed in heart, brain, and placenta and testis.

It is found in the preautophagosomal structure membrane. The enzyme catalyses a 1,2-diacyl-sn-glycero-3-phosphocholine(in) = a 1,2-diacyl-sn-glycero-3-phosphocholine(out). It carries out the reaction a 1,2-diacyl-sn-glycero-3-phospho-L-serine(in) = a 1,2-diacyl-sn-glycero-3-phospho-L-serine(out). It catalyses the reaction a 1,2-diacyl-sn-glycero-3-phosphoethanolamine(in) = a 1,2-diacyl-sn-glycero-3-phosphoethanolamine(out). Functionally, phospholipid scramblase involved in autophagy by mediating autophagosomal membrane expansion. Cycles between the preautophagosomal structure/phagophore assembly site (PAS) and the cytoplasmic vesicle pool and supplies membrane for the growing autophagosome. Lipid scramblase activity plays a key role in preautophagosomal structure/phagophore assembly by distributing the phospholipids that arrive through ATG2 (ATG2A or ATG2B) from the cytoplasmic to the luminal leaflet of the bilayer, thereby driving autophagosomal membrane expansion. In addition to autophagy, also plays a role in necrotic cell death. The sequence is that of Autophagy-related protein 9B from Mus musculus (Mouse).